A 571-amino-acid chain; its full sequence is MYYMLIGFIIVVIAVIGAGYILKRKHYQRINELEEKKIKLRERPVIDELSKVKKLKLTGQTEALFESWRSSWDEIETRLFPDLEEVLLEAEMNTDRYKFRSATHAENDIEQMLVVIEKQMDQILGGLKELLISEEKNAKESRATKEKFAELRREVLTRGFKLGETLPYIETKLSELSESLNSYDSLTDQGDHLEAREIVIVVQKEMQVIEAQMERIPSLLHETDTILPEEMTKLRAGYEEMVRKGYYLAQMELDKEISRMKNQIDKMKKNVINLDLDEAEQGVEELHNEIDLFYDTLEHEAEARHFVKENHSPTSDKLQRQNAVSDALAEQITEVKQTYHVAEDDLAVYLKTSAKLSEAKENFEQLTALIASGEIAYSAAQDTLKEIDAALITISAEQDKFAEELRSLRKDELEARDDAERMRRAIITLDRKMERERLPGLPEEYLSLREHMGESINALEKRLEEKPLNMKAVSQDWRIAEEDLTHLTEKAEEMMENVRLVEHVIQYANRYRLRNKELADELVQAENHFYNDYQYKKALEIAVTALEKVETGAFKKVEKAYESKVSVDDIE.

Topologically, residues 1 to 3 (MYY) are extracellular. Residues 4–22 (MLIGFIIVVIAVIGAGYIL) traverse the membrane as a helical segment. Residues 23–571 (KRKHYQRINE…ESKVSVDDIE (549 aa)) are Cytoplasmic-facing. Coiled coils occupy residues 248-298 (LAQM…DTLE), 326-374 (DALA…ASGE), 400-437 (KFAE…ERER), and 478-529 (RIAE…ENHF).

It belongs to the EzrA family.

The protein resides in the cell membrane. Its function is as follows. Negative regulator of FtsZ ring formation; modulates the frequency and position of FtsZ ring formation. Inhibits FtsZ ring formation at polar sites. Interacts either with FtsZ or with one of its binding partners to promote depolymerization. The polypeptide is Septation ring formation regulator EzrA (Listeria monocytogenes serotype 4b (strain CLIP80459)).